The primary structure comprises 110 residues: Small ribosomal subunit protein eS24 (110 aa).

The disordered stretch occupies residues 91-110; it reads RNKVEEQAEEAEEAEAGAAE. The span at 97–110 shows a compositional bias: acidic residues; that stretch reads QAEEAEEAEAGAAE.

The protein belongs to the eukaryotic ribosomal protein eS24 family.

In Archaeoglobus fulgidus (strain ATCC 49558 / DSM 4304 / JCM 9628 / NBRC 100126 / VC-16), this protein is Small ribosomal subunit protein eS24.